Consider the following 383-residue polypeptide: PqqA peptide cyclase (383 aa).

Residues 11-226 (PGPPLWLLAE…TNQWREKLAA (216 aa)) form the Radical SAM core domain. The [4Fe-4S] cluster site is built by cysteine 25, cysteine 29, and cysteine 32.

It belongs to the radical SAM superfamily. PqqE family. In terms of assembly, interacts with PqqD. The interaction is necessary for activity of PqqE. Requires [4Fe-4S] cluster as cofactor.

The catalysed reaction is [PQQ precursor protein] + S-adenosyl-L-methionine = E-Y cross-linked-[PQQ precursor protein] + 5'-deoxyadenosine + L-methionine + H(+). The protein operates within cofactor biosynthesis; pyrroloquinoline quinone biosynthesis. In terms of biological role, catalyzes the cross-linking of a glutamate residue and a tyrosine residue in the PqqA protein as part of the biosynthesis of pyrroloquinoline quinone (PQQ). The polypeptide is PqqA peptide cyclase (Azotobacter vinelandii (strain DJ / ATCC BAA-1303)).